The chain runs to 1679 residues: AF4/FMR2 family member lilli (1679 aa).

Disordered regions lie at residues 1–21 (MAQQ…SSIN), 55–78 (NYNM…QQGI), 124–305 (RSAP…EKDV), 406–539 (LHQL…GAQN), 580–609 (MGAG…SNKW), 733–755 (DSGT…AVGG), 783–1172 (QPTQ…TTPH), and 1197–1319 (TPAQ…LQIG). The segment covering 69 to 78 (REKIERQQGI) has biased composition (basic and acidic residues). 2 stretches are compositionally biased toward low complexity: residues 144 to 181 (SLGH…QQQQ) and 212 to 244 (PSSS…SSGG). The residue at position 421 (Thr-421) is a Phosphothreonine. Basic and acidic residues predominate over residues 429-442 (LKTEKNHSLEKQDS). The span at 444–455 (LENDLELSESED) shows a compositional bias: acidic residues. Residues Ser-451 and Ser-453 each carry the phosphoserine modification. Over residues 464-484 (SAGNSSNSSESDSSESGSESS) the composition is skewed to low complexity. Positions 492–501 (HPNHQQHHHQ) are enriched in basic residues. The span at 502–532 (LQQQQQQQQQQASMQQQQVLQQQQQHRPQPL) shows a compositional bias: low complexity. The segment covering 582-591 (AGSGSGGTLS) has biased composition (gly residues). A compositionally biased stretch (polar residues) spans 598–609 (NKTPSPTESNKW). Over residues 733 to 752 (DSGTSASGSSSSSSSSSDSA) the composition is skewed to low complexity. The span at 783-796 (QPTQSQKAPPSNSV) shows a compositional bias: polar residues. Residues 810–820 (QRQKKPRKKKA) are compositionally biased toward basic residues. Phosphoserine is present on residues Ser-829 and Ser-830. A DNA-binding region (a.T hook) is located at residues 859 to 871 (KKGRGRPRKQQQS). Low complexity predominate over residues 868 to 906 (QQQSGGSGNLSSASAGSSSQTKGPTLTAAKKPLAKTPLA). Phosphoserine is present on residues Ser-879 and Ser-881. Residues 917–927 (SQSSSNGNTPT) are compositionally biased toward polar residues. Composition is skewed to low complexity over residues 957 to 973 (SSSA…SSSS) and 1001 to 1012 (GSGSSSPSSSGS). The segment covering 1019–1030 (TRSQVGSGQALA) has biased composition (polar residues). Over residues 1042–1068 (SQHSQHLSSSECSSSSGGCTAVCSSSS) the composition is skewed to low complexity. A compositionally biased stretch (basic and acidic residues) spans 1073-1090 (EGRREKERERKPKSDKNK). A compositionally biased stretch (pro residues) spans 1130-1140 (QPPPPQAPPAA). The span at 1198-1213 (PAQQNGHLTPKDQATN) shows a compositional bias: polar residues. 2 stretches are compositionally biased toward basic and acidic residues: residues 1234-1251 (EHPV…EAKF) and 1260-1288 (FQLK…EQPP). Ser-1368 carries the phosphoserine modification. Thr-1370 carries the post-translational modification Phosphothreonine. A compositionally biased stretch (low complexity) spans 1569–1589 (GNTPSSISPSNSVGSQGSGSN). The tract at residues 1569–1594 (GNTPSSISPSNSVGSQGSGSNTPPGR) is disordered.

It belongs to the AF4 family.

Its subcellular location is the nucleus. In terms of biological role, has a role in transcriptional regulation. Acts in parallel with the Ras/MAPK and the PI3K/PKB pathways in the control of cell identity and cellular growth. Essential for regulation of the cytoskeleton and cell growth but not for cell proliferation or growth rate. Required specifically for the microtubule-based basal transport of lipid droplets. Plays a partially redundant function downstream of Raf in cell fate specification in the developing eye. Pair-rule protein that regulates embryonic cellularization, gastrulation and segmentation. The sequence is that of AF4/FMR2 family member lilli from Drosophila erecta (Fruit fly).